The primary structure comprises 123 residues: Small ribosomal subunit protein uS12 (123 aa).

Residues 1–22 (MATINQLVRQPRKRSVEKSDVP) are disordered. Asp-89 carries the post-translational modification 3-methylthioaspartic acid. The tract at residues 100-123 (GSLDTSGVKGRNQGRSKYGTKRPK) is disordered. Over residues 111-123 (NQGRSKYGTKRPK) the composition is skewed to basic residues.

The protein belongs to the universal ribosomal protein uS12 family. Part of the 30S ribosomal subunit. Contacts proteins S8 and S17. May interact with IF1 in the 30S initiation complex.

In terms of biological role, with S4 and S5 plays an important role in translational accuracy. Its function is as follows. Interacts with and stabilizes bases of the 16S rRNA that are involved in tRNA selection in the A site and with the mRNA backbone. Located at the interface of the 30S and 50S subunits, it traverses the body of the 30S subunit contacting proteins on the other side and probably holding the rRNA structure together. The combined cluster of proteins S8, S12 and S17 appears to hold together the shoulder and platform of the 30S subunit. In Pseudomonas putida (strain GB-1), this protein is Small ribosomal subunit protein uS12.